We begin with the raw amino-acid sequence, 75 residues long: Small ribosomal subunit protein bS18 (75 aa).

The protein belongs to the bacterial ribosomal protein bS18 family. In terms of assembly, part of the 30S ribosomal subunit. Forms a tight heterodimer with protein bS6.

Binds as a heterodimer with protein bS6 to the central domain of the 16S rRNA, where it helps stabilize the platform of the 30S subunit. This is Small ribosomal subunit protein bS18 from Klebsiella pneumoniae (strain 342).